The sequence spans 166 residues: Regulatory protein RecX (166 aa).

Belongs to the RecX family.

It localises to the cytoplasm. Its function is as follows. Modulates RecA activity. The protein is Regulatory protein RecX of Salmonella arizonae (strain ATCC BAA-731 / CDC346-86 / RSK2980).